A 113-amino-acid chain; its full sequence is UPF0342 protein spyM18_0873 (113 aa).

The protein belongs to the UPF0342 family.

This chain is UPF0342 protein spyM18_0873, found in Streptococcus pyogenes serotype M18 (strain MGAS8232).